The following is a 131-amino-acid chain: Profilin LP04 (131 aa).

The protein belongs to the profilin family. Occurs in many kinds of cells as a complex with monomeric actin in a 1:1 ratio.

It localises to the cytoplasm. The protein localises to the cytoskeleton. Functionally, binds to actin and affects the structure of the cytoskeleton. At high concentrations, profilin prevents the polymerization of actin, whereas it enhances it at low concentrations. By binding to PIP2, it inhibits the formation of IP3 and DG. In Oryza sativa subsp. indica (Rice), this protein is Profilin LP04.